Consider the following 309-residue polypeptide: Malate dehydrogenase (309 aa).

NAD(+) contacts are provided by residues 9 to 14 and D33; that span reads GAGFVG. Residues R82 and R88 each coordinate substrate. Residues N95 and 118 to 120 contribute to the NAD(+) site; that span reads VNN. Residues N120 and R151 each coordinate substrate. The active-site Proton acceptor is the H175.

It belongs to the LDH/MDH superfamily. MDH type 3 family.

The catalysed reaction is (S)-malate + NAD(+) = oxaloacetate + NADH + H(+). In terms of biological role, catalyzes the reversible oxidation of malate to oxaloacetate. This Chloroflexus aurantiacus (strain ATCC 29364 / DSM 637 / Y-400-fl) protein is Malate dehydrogenase.